Consider the following 366-residue polypeptide: Tubulin-like protein CetZ (366 aa).

GTP-binding positions include 10–14 (QCGTK), 103–105 (GTG), Glu-136, Asn-163, and Asn-181.

This sequence belongs to the CetZ family.

The protein localises to the cytoplasm. Functionally, involved in cell shape control. The polypeptide is Tubulin-like protein CetZ (Pyrococcus furiosus (strain ATCC 43587 / DSM 3638 / JCM 8422 / Vc1)).